The sequence spans 66 residues: Gas vesicle protein A (66 aa).

It belongs to the gas vesicle GvpA family. In terms of assembly, the gas vesicle shell is 2 nm thick and consists of a single layer of this protein. It forms helical ribs nearly perpendicular to the long axis of the vesicle.

The protein localises to the gas vesicle shell. In terms of biological role, gas vesicles are hollow, gas filled proteinaceous nanostructures found in some microorganisms. During planktonic growth they allow positioning of the organism at a favorable depth for light or nutrient acquisition. GvpA forms the protein shell. In Thiocapsa pendens (Amoebobacter pendens), this protein is Gas vesicle protein A.